A 288-amino-acid chain; its full sequence is ATP synthase gamma chain (288 aa).

This sequence belongs to the ATPase gamma chain family. As to quaternary structure, F-type ATPases have 2 components, CF(1) - the catalytic core - and CF(0) - the membrane proton channel. CF(1) has five subunits: alpha(3), beta(3), gamma(1), delta(1), epsilon(1). CF(0) has three main subunits: a, b and c.

The protein resides in the cell inner membrane. Its function is as follows. Produces ATP from ADP in the presence of a proton gradient across the membrane. The gamma chain is believed to be important in regulating ATPase activity and the flow of protons through the CF(0) complex. This is ATP synthase gamma chain from Aliivibrio salmonicida (strain LFI1238) (Vibrio salmonicida (strain LFI1238)).